A 98-amino-acid polypeptide reads, in one-letter code: NADH-ubiquinone oxidoreductase chain 4L (98 aa).

3 helical membrane-spanning segments follow: residues 1-21 (MSLT…GLLM), 29-49 (ALLC…ITIL), and 61-81 (IILL…LVMV).

This sequence belongs to the complex I subunit 4L family. In terms of assembly, core subunit of respiratory chain NADH dehydrogenase (Complex I) which is composed of 45 different subunits.

It localises to the mitochondrion inner membrane. The enzyme catalyses a ubiquinone + NADH + 5 H(+)(in) = a ubiquinol + NAD(+) + 4 H(+)(out). Its function is as follows. Core subunit of the mitochondrial membrane respiratory chain NADH dehydrogenase (Complex I) which catalyzes electron transfer from NADH through the respiratory chain, using ubiquinone as an electron acceptor. Part of the enzyme membrane arm which is embedded in the lipid bilayer and involved in proton translocation. In Rhinophylla pumilio (Dwarf little fruit bat), this protein is NADH-ubiquinone oxidoreductase chain 4L (MT-ND4L).